A 251-amino-acid chain; its full sequence is 2,3-bisphosphoglycerate-dependent phosphoglycerate mutase (251 aa).

Substrate-binding positions include 11–18 (RHGESDWN), 24–25 (TG), R63, 90–93 (ERHY), K101, 117–118 (RR), and 184–185 (GN). Catalysis depends on H12, which acts as the Tele-phosphohistidine intermediate. Catalysis depends on E90, which acts as the Proton donor/acceptor.

It belongs to the phosphoglycerate mutase family. BPG-dependent PGAM subfamily.

It catalyses the reaction (2R)-2-phosphoglycerate = (2R)-3-phosphoglycerate. Its pathway is carbohydrate degradation; glycolysis; pyruvate from D-glyceraldehyde 3-phosphate: step 3/5. Functionally, catalyzes the interconversion of 2-phosphoglycerate and 3-phosphoglycerate. The chain is 2,3-bisphosphoglycerate-dependent phosphoglycerate mutase from Mycobacterium marinum (strain ATCC BAA-535 / M).